We begin with the raw amino-acid sequence, 2422 residues long: Interferon-induced very large GTPase 1 (2422 aa).

The tract at residues 945–965 is disordered; that stretch reads ENFFEDSDSPTKSSSTEPSPH. Residues 954-963 are compositionally biased toward low complexity; sequence PTKSSSTEPS. In terms of domain architecture, VLIG-type G spans 1479-1720; sequence DKRLFVLSIL…KISDVKSRVQ (242 aa). Residues 1489–1496, 1542–1545, and 1619–1622 each bind GTP; these read GLQSSGKS, DTEG, and TATD.

Belongs to the TRAFAC class dynamin-like GTPase superfamily. Very large inducible GTPase (VLIG) family.

It localises to the cytoplasm. The protein localises to the cytosol. Its subcellular location is the nucleus. The polypeptide is Interferon-induced very large GTPase 1 (GVINP1) (Homo sapiens (Human)).